Consider the following 874-residue polypeptide: MSAKKLTGNEIRKKFLSFYAQREHTILPSASLVPEDPTVLLTIAGMLPFKPIFLGQQPRQYPRATTSQKCIRTNDIENVGRTARHHTFFEMLGNFSFGDYFKPEAIALAWELSTKIFALPPERLVVSVFREDDEAFAIWRDQIGIPAHRIQRMDEADNFWASGPTGPCGPCSEIYYDFHPELGDDHIDLEDDTRFIEFYNLVFMQYNRDANGNLTPLENRNIDTGMGLERMAQILQKVPNNYETDLIFPIIKTASDIADIDYRKSDDKTKVSLKVIGDHVRAVANLIADGVTASNVGRGYILRRLIRRVVRHGRLIGISGEFTSKVAETAITLAEDIYPNLRERETVIKAELQREESRFLETLERGEKLLAEIMAKPETKKTQHISGEDAFKLYDTYGFPLELTQEIAEENGLTVDVSMFDQEMKLAQIRSQSAHETIDLTAQDGVKLDIDKTQFLGYTDLSSPAQVMALVGDGEQLETVQAGAQVQIVLDKTPFYAESGGQIADRGYLSGDSLVVRIEDVQKQNNIFVHFGRIERGRLQLGMTVNAQIDGTCRRRAQANHTATHLLQAALRSLVDSSISQAGSLVSFDRLRFDFNCPRGLKPEEVEQVEAQVNSWIAEAHSATVAEMPLEVAKAKGAVAMFGEKYADVVRVVDYPGVSMELCGGTHVNNTAEIGVFKIISEAGISSGVRRIEAVAGLAVLDYLKVRDAVVKELSDRFKAKPEELSERVSNLQQELKDSQKQLEALKGELAVAKSDQLLGNAETVGEFQILVAEMPGVDAEALKTAAERLQQKLDESAVVLGSAAEGKVSLVAAFSKSVNGKGLQAGKFIGGIAKICGGGGGGRPNLAQAGGRDPSKLKEALESAKEQLVDGLK.

His561, His565, Cys663, and His667 together coordinate Zn(2+).

The protein belongs to the class-II aminoacyl-tRNA synthetase family. It depends on Zn(2+) as a cofactor.

Its subcellular location is the cytoplasm. The catalysed reaction is tRNA(Ala) + L-alanine + ATP = L-alanyl-tRNA(Ala) + AMP + diphosphate. Catalyzes the attachment of alanine to tRNA(Ala) in a two-step reaction: alanine is first activated by ATP to form Ala-AMP and then transferred to the acceptor end of tRNA(Ala). Also edits incorrectly charged Ser-tRNA(Ala) and Gly-tRNA(Ala) via its editing domain. The protein is Alanine--tRNA ligase of Trichodesmium erythraeum (strain IMS101).